Consider the following 259-residue polypeptide: Gem-associated protein 2 (259 aa).

The protein belongs to the gemin-2 family. In terms of assembly, forms a stable heteromeric complex with survival of motor neuron protein (SMN), GEMIN3 and GEMIN4. The SMN complex is associated with the spliceosomal snRNAs U1 and U5 in the cytoplasm of oocytes.

The protein localises to the nucleus. It is found in the gem. Its subcellular location is the cytoplasm. In terms of biological role, the SMN complex catalyzes the assembly of small nuclear ribonucleoproteins (snRNPs), the building blocks of the spliceosome, and thereby plays an important role in the splicing of cellular pre-mRNAs. Most spliceosomal snRNPs contain a common set of Sm proteins SNRPB, SNRPD1, SNRPD2, SNRPD3, SNRPE, SNRPF and SNRPG that assemble in a heptameric protein ring on the Sm site of the small nuclear RNA to form the core snRNP (Sm core). In the cytosol, the Sm proteins SNRPD1, SNRPD2, SNRPE, SNRPF and SNRPG (5Sm) are trapped in an inactive 6S pICln-Sm complex by the chaperone CLNS1A that controls the assembly of the core snRNP. To assemble core snRNPs, the SMN complex accepts the trapped 5Sm proteins from CLNS1A. Binding of snRNA inside 5Sm ultimately triggers eviction of the SMN complex, thereby allowing binding of SNRPD3 and SNRPB to complete assembly of the core snRNP. Within the SMN complex, GEMIN2 constrains the conformation of 5Sm, thereby promoting 5Sm binding to snRNA containing the snRNP code (a nonameric Sm site and a 3'-adjacent stem-loop), thus preventing progression of assembly until a cognate substrate is bound. The protein is Gem-associated protein 2 (gemin2) of Xenopus laevis (African clawed frog).